A 426-amino-acid polypeptide reads, in one-letter code: MSVWALGLNHTTAPLDLRGRFAYALDQIEPTLRGLRESLARQPEATLLSTCNRTEIYCAGDHNDLEHTLEWLAHNGGVSPALLRSHAYTLQDDQAARHAFRVASGLDSMVLGEPQILGQLKDAVRAAEDAGAMGSTLHQLFQRSFAVAKEVRTSTEIGAHSISMAAASVRLAGQLFENLGDIRVLFVGAGEMIDLAATHFAAKTPKSMAIANRTLERGEKLASRFGAEVMRLADLPSRLHEFDAVISCTASTLPIIGLGAVERAVKLRKHRPMFMVDLAVPRDIEPEVKDLPDIYLYTVDDLAHVVQTGKDNRQAAVAQAEVIIDAGVQNFMHWLGQRRTVPLIQQLNAQTDEWRAAEIARAKKLIAKGEPMDAVLDALTRGLTQKMLHGALAELHAGDAASREATAHTVSRLFLRGQPPKEHKER.

Substrate-binding positions include 50–53, S108, 113–115, and Q119; these read TCNR and EPQ. C51 serves as the catalytic Nucleophile. 188-193 lines the NADP(+) pocket; sequence GAGEMI.

Belongs to the glutamyl-tRNA reductase family. Homodimer.

The enzyme catalyses (S)-4-amino-5-oxopentanoate + tRNA(Glu) + NADP(+) = L-glutamyl-tRNA(Glu) + NADPH + H(+). It functions in the pathway porphyrin-containing compound metabolism; protoporphyrin-IX biosynthesis; 5-aminolevulinate from L-glutamyl-tRNA(Glu): step 1/2. Its function is as follows. Catalyzes the NADPH-dependent reduction of glutamyl-tRNA(Glu) to glutamate 1-semialdehyde (GSA). The chain is Glutamyl-tRNA reductase from Polaromonas sp. (strain JS666 / ATCC BAA-500).